The following is a 1286-amino-acid chain: Lysine-specific demethylase JMJ705 (1286 aa).

The region spanning 25–66 is the JmjN domain; the sequence is APEFRPTAAEFADPVSYILKIEPAAAPYGICKVVPPLPPPPK. A disordered region spans residues 82–105; that stretch reads PDDRSPSFPTRHQQVGLCPRRTRP. Positions 201 to 367 constitute a JmjC domain; that stretch reads ETAWNMRGVA…IAKEAAIRRA (167 aa). 3 residues coordinate Fe cation: histidine 244, glutamate 246, and histidine 335. Positions 641–679 are enriched in polar residues; that stretch reads PNSSNNVGCVGTKLSSSSTERQERPSSQNAHCNGSSVIS. Disordered regions lie at residues 641–686, 1013–1060, and 1077–1164; these read PNSS…KGVR, AEPV…HSQE, and PAGT…PKQA. Residues 1119–1136 are compositionally biased toward polar residues; the sequence is HASGQKSNVQEANANSAS. The C2H2-type 1; degenerate zinc-finger motif lies at 1167–1189; sequence YSCDIEGCSMSFRTKRDLSLHKS. C2H2-type zinc fingers lie at residues 1190–1214, 1220–1244, and 1250–1276; these read DICPVKGCGKKFFSHKYLLQHRKVH, LTCPWKGCNMAFKWPWARTEHLRVH, and YVCHEPGCAQTFRFVSDFSRHKRKTGH.

It depends on Fe(2+) as a cofactor. Expressed in leaves and flag leaves. Expressed at low levels in roots, shoots, stems and panicles.

The protein resides in the nucleus. It carries out the reaction N(6),N(6),N(6)-trimethyl-L-lysyl(27)-[histone H3] + 2 2-oxoglutarate + 2 O2 = N(6)-methyl-L-lysyl(27)-[histone H3] + 2 formaldehyde + 2 succinate + 2 CO2. Its function is as follows. Histone demethylase that demethylates 'Lys-27' (H3K27me) of histone H3 with a specific activity for H3K27me3 and H3K27me2. No activity on H3K4me3, H3K9me3, H3K27me1 and H3K36me3. Involved in biotic stress response. May demethylate H3K27me3-marked defense-related genes and increase their basal and induced expression levels during pathogen infection. This Oryza sativa subsp. japonica (Rice) protein is Lysine-specific demethylase JMJ705 (JMJ705).